A 274-amino-acid polypeptide reads, in one-letter code: MKKTAIALLAWFVSSASLAATPWQKITHPVPGAAQSVGSFANGCIIGADTLPVQSDNYQVMRTDQRRYFGHPDLVMFIQRLSHQAHQRGLGTVLIGDMGMPAGGRFNGGHASHQTGLDVDIFLQLPKTRWSQAQLLRPQALDLVSRDGKHVVPSRWSSDIASLIKLAAEDNDVTRIFVNPAIKQQLCLDAGSDRDWLRKVRPWFQHRAHMHVRLRCPADSLECEDQPLPPPGDGCGAELQSWFEPPKPGTTKPEKKTPPPLPPSCQALLDEHVL.

The first 19 residues, 1 to 19, serve as a signal peptide directing secretion; that stretch reads MKKTAIALLAWFVSSASLA. Cystine bridges form between C44/C265, C187/C235, and C216/C223. Residues H110, H113, D120, D147, H150, and H211 each contribute to the Zn(2+) site. Positions 225-274 are disordered; the sequence is DQPLPPPGDGCGAELQSWFEPPKPGTTKPEKKTPPPLPPSCQALLDEHVL.

It belongs to the peptidase M74 family. In terms of assembly, dimer. Zn(2+) serves as cofactor.

Its subcellular location is the periplasm. Murein endopeptidase that cleaves the D-alanyl-meso-2,6-diamino-pimelyl amide bond that connects peptidoglycan strands. Likely plays a role in the removal of murein from the sacculus. This is Penicillin-insensitive murein endopeptidase from Salmonella arizonae (strain ATCC BAA-731 / CDC346-86 / RSK2980).